A 168-amino-acid chain; its full sequence is 3-dehydroquinate dehydratase (168 aa).

Tyr22 acts as the Proton acceptor in catalysis. Positions 76, 82, and 89 each coordinate substrate. His102 acts as the Proton donor in catalysis. Residues 103–104 (LT) and Arg113 contribute to the substrate site.

Belongs to the type-II 3-dehydroquinase family. Homododecamer.

The enzyme catalyses 3-dehydroquinate = 3-dehydroshikimate + H2O. It participates in metabolic intermediate biosynthesis; chorismate biosynthesis; chorismate from D-erythrose 4-phosphate and phosphoenolpyruvate: step 3/7. Its function is as follows. Catalyzes a trans-dehydration via an enolate intermediate. The protein is 3-dehydroquinate dehydratase of Helicobacter acinonychis (strain Sheeba).